The chain runs to 979 residues: Oncostatin-M-specific receptor subunit beta (979 aa).

The N-terminal stretch at 1-27 (MALFAVFQTTFFLTLLSLRTYQSEVLA) is a signal peptide. Topologically, residues 28-740 (ERLPLTPVSL…VTTPDEHSSM (713 aa)) are extracellular. The N-linked (GlcNAc...) asparagine glycan is linked to Asn163. Cys245 and Cys255 are oxidised to a cystine. N-linked (GlcNAc...) asparagine glycosylation is found at Asn326 and Asn380. Fibronectin type-III domains follow at residues 335–428 (NPFS…TLEA), 433–528 (APDV…DPEN), 529–623 (KEVE…SQEL), and 625–736 (PSDN…TPDE). Residues 415–419 (WSEWS) carry the WSXWS motif motif. 2 N-linked (GlcNAc...) asparagine glycosylation sites follow: Asn446 and Asn580. The helical transmembrane segment at 741–761 (LIHILLPMVFCVLLIMVMCYL) threads the bilayer. The Cytoplasmic segment spans residues 762–979 (KSQWIKETCY…TLLDPGEHYC (218 aa)). The Box 1 motif motif lies at 770–778 (CYPDIPDPY). Phosphoserine occurs at positions 826 and 889.

The protein belongs to the type I cytokine receptor family. Type 2 subfamily. In terms of assembly, heterodimer composed of OSMR and IL6ST (type II OSM receptor). Heterodimer with IL31RA to form the IL31 receptor. As to expression, expressed in keratinocytes (at protein level). Expressed at relatively high levels in all neural cells as well as fibroblast and epithelial cells.

It localises to the membrane. Associates with IL31RA to form the IL31 receptor. Binds IL31 to activate STAT3 and possibly STAT1 and STAT5. Capable of transducing OSM-specific signaling events. This is Oncostatin-M-specific receptor subunit beta (OSMR) from Homo sapiens (Human).